Here is a 199-residue protein sequence, read N- to C-terminus: Probable cobalt-precorrin-6B C(15)-methyltransferase (decarboxylating) (199 aa).

S-adenosyl-L-methionine contacts are provided by residues T24, 48 to 52, D72, and A101; that span reads GCGTG.

Belongs to the methyltransferase superfamily. Archaeal-type CbiT family.

It catalyses the reaction Co-precorrin-6B + S-adenosyl-L-methionine = Co-precorrin-7 + S-adenosyl-L-homocysteine + CO2. It functions in the pathway cofactor biosynthesis; adenosylcobalamin biosynthesis; cob(II)yrinate a,c-diamide from sirohydrochlorin (anaerobic route): step 8/10. In terms of biological role, catalyzes the methylation of C-15 in cobalt-precorrin-6B followed by the decarboxylation of C-12 to form cobalt-precorrin-7. The polypeptide is Probable cobalt-precorrin-6B C(15)-methyltransferase (decarboxylating) (Saccharolobus islandicus (strain Y.N.15.51 / Yellowstone #2) (Sulfolobus islandicus)).